We begin with the raw amino-acid sequence, 306 residues long: Anamorsin (306 aa).

Positions 6–172 (IAPGQRVAVI…KPNFEVGSSS (167 aa)) are N-terminal SAM-like domain. The linker stretch occupies residues 173-224 (QLKLSFAKKTSPSGKPSVDPATAKLWTLSASDMNDEEMDLLDSDELLDSEDL). Residues C237, C246, C249, and C251 each coordinate [2Fe-2S] cluster. Residues 237–251 (CKEKGKKKACKNCTC) are fe-S binding site A. C270, C273, C281, and C284 together coordinate [4Fe-4S] cluster. 2 consecutive short sequence motifs (cx2C motif) follow at residues 270-273 (CGNC) and 281-284 (CASC). The segment at 270–284 (CGNCYLGDAFRCASC) is fe-S binding site B.

This sequence belongs to the anamorsin family. Monomer. Interacts with NDOR1. Interacts with CHCHD4. The cofactor is [2Fe-2S] cluster. Requires [4Fe-4S] cluster as cofactor.

It localises to the cytoplasm. It is found in the nucleus. The protein localises to the mitochondrion intermembrane space. Its function is as follows. Component of the cytosolic iron-sulfur (Fe-S) protein assembly (CIA) machinery required for the maturation of extramitochondrial Fe-S proteins. Part of an electron transfer chain functioning in an early step of cytosolic Fe-S biogenesis, facilitating the de novo assembly of a [4Fe-4S] cluster on the scaffold complex NUBP1-NUBP2. Electrons are transferred to CIAPIN1 from NADPH via the FAD- and FMN-containing protein NDOR1. NDOR1-CIAPIN1 are also required for the assembly of the diferric tyrosyl radical cofactor of ribonucleotide reductase (RNR), probably by providing electrons for reduction during radical cofactor maturation in the catalytic small subunit. Has anti-apoptotic effects in the cell. Involved in negative control of cell death upon cytokine withdrawal. Promotes development of hematopoietic cells. In Gallus gallus (Chicken), this protein is Anamorsin.